The primary structure comprises 906 residues: Cadherin-2 (906 aa).

Residues 1-25 form the signal peptide; sequence MCRIVGAPRTLLPLLAALLQASVEA. The propeptide occupies 26–159; that stretch reads SGGIALCKTG…HNGHLQRQKR (134 aa). Ser-96 and Ser-135 each carry phosphoserine. Cadherin domains are found at residues 160-267, 268-382, 383-497, 498-603, and 604-714; these read DWVI…RPEF, LHQV…PPEF, TAMS…NPYF, APNP…DNAP, and QVVP…DVDR. Residues 160–724 lie on the Extracellular side of the membrane; that stretch reads DWVIPPINLP…IVGAGLGTGA (565 aa). Glu-170 contacts Ca(2+). Asn-190 is a glycosylation site (N-linked (GlcNAc...) asparagine). Ca(2+) is bound by residues Asp-226, Glu-228, Asp-259, Met-260, Asn-261, Asp-262, and Asn-263. N-linked (GlcNAc...) asparagine glycosylation occurs at Asn-273. Ca(2+) is bound by residues Asp-293, Asp-295, and Asn-301. Asn-325 carries an N-linked (GlcNAc...) asparagine glycan. Asp-353 contacts Ca(2+). N-linked (GlcNAc...) asparagine glycans are attached at residues Asn-402, Asn-572, Asn-622, Asn-651, and Asn-692. The helical transmembrane segment at 725–745 threads the bilayer; it reads IIAILLCIIILLILVLMFVVW. Residues 746–906 are Cytoplasmic-facing; the sequence is MKRRDKERQA…LADMYGGGDD (161 aa). Positions 863 to 880 are enriched in low complexity; sequence SGSTAGSLSSLNSSSSGG. Positions 863–884 are disordered; sequence SGSTAGSLSSLNSSSSGGEQDY.

In terms of assembly, homodimer (via extracellular region). Can also form heterodimers with other cadherins (via extracellular region). Dimerization occurs in trans, i.e. with a cadherin chain from another cell. Interacts with CDCP1. Interacts with PCDH8; this complex may also include TAOK2. The interaction with PCDH8 may lead to internalization through TAOK2/p38 MAPK pathway. Identified in a complex containing FGFR4, NCAM1, CDH2, PLCG1, FRS2, SRC, SHC1, GAP43 and CTTN. May interact with OBSCN (via protein kinase domain 2). Interacts with FBXO45. In terms of processing, cleaved by MMP24. Ectodomain cleavage leads to the generation of a soluble 90 kDa N-terminal soluble fragment and a 45 kDa membrane-bound C-terminal fragment 1 (CTF1), which is further cleaved by gamma-secretase into a 35 kDa. Cleavage in neural stem cells by MMP24 affects CDH2-mediated anchorage of neural stem cells to ependymocytes in the adult subependymal zone, leading to modulate neural stem cell quiescence. Post-translationally, may be phosphorylated by OBSCN.

Its subcellular location is the cell membrane. It localises to the sarcolemma. It is found in the cell junction. The protein resides in the cell surface. The protein localises to the desmosome. Its subcellular location is the adherens junction. Calcium-dependent cell adhesion protein; preferentially mediates homotypic cell-cell adhesion by dimerization with a CDH2 chain from another cell. Cadherins may thus contribute to the sorting of heterogeneous cell types. Acts as a regulator of neural stem cells quiescence by mediating anchorage of neural stem cells to ependymocytes in the adult subependymal zone: upon cleavage by MMP24, CDH2-mediated anchorage is affected, leading to modulate neural stem cell quiescence. Plays a role in cell-to-cell junction formation between pancreatic beta cells and neural crest stem (NCS) cells, promoting the formation of processes by NCS cells. CDH2 may be involved in neuronal recognition mechanism. In hippocampal neurons, may regulate dendritic spine density. The chain is Cadherin-2 (CDH2) from Rhinolophus ferrumequinum (Greater horseshoe bat).